Here is a 349-residue protein sequence, read N- to C-terminus: Probable FBD-associated F-box protein At5g38565 (349 aa).

The region spanning 1–47 (MDIFNGLPDDVLVKILSFVPTKVAVSTSILSKRWEFLWMWLPRLDFG) is the F-box domain. The FBD domain occupies 263 to 311 (CWNQPISVPECLLESLQIFNLSHYFGKQQDLDFVVYILKNACHLKTATI).

In Arabidopsis thaliana (Mouse-ear cress), this protein is Probable FBD-associated F-box protein At5g38565.